The chain runs to 461 residues: High-affinity Na(+)/H(+) antiporter NhaS3 (461 aa).

The next 11 membrane-spanning stretches (helical) occupy residues 22-42 (TEIAPLVLAGVLLSLVVIYFA), 58-78 (VLGELVGGVLVGVSALKLLLF), 113-133 (SEVISVISELGVIILLFEIGL), 148-170 (AIVAVVGVVTPFSLGTIGLMTIF), 175-197 (IPAIFAGAALTATSIGITAKVLA), 209-229 (IIIGAAVLDDILGIIVLAVVG), 239-259 (ISNIIYLILSATGFVVGSILI), 280-300 (LLLVSICVAFVLSYIAQIVQL), 360-380 (GLIIAAFLILVAIVGKVVTGF), 391-411 (LAIGVGMIPRGEVGLVFAGVG), and 424-444 (AIIVMVIVTTFVAPPWLRAVF).

This sequence belongs to the monovalent cation:proton antiporter 2 (CPA2) transporter (TC 2.A.37) family.

It localises to the cellular thylakoid membrane. In terms of biological role, na(+)/H(+) antiporter that transports sodium from the cytoplasm into the thylakoid lumen in exchange for protons. Contributes to sodium homeostasis and tolerance. Also has Li(+)/H(+) antiport activity under K(+)-free conditions, but not under K(+)-rich conditions. This is High-affinity Na(+)/H(+) antiporter NhaS3 (nhaS3) from Synechocystis sp. (strain ATCC 27184 / PCC 6803 / Kazusa).